Consider the following 155-residue polypeptide: 2-C-methyl-D-erythritol 2,4-cyclodiphosphate synthase (155 aa).

The a divalent metal cation site is built by aspartate 8 and histidine 10. Residues 8 to 10 and 34 to 35 each bind 4-CDP-2-C-methyl-D-erythritol 2-phosphate; these read DVH and HS. Histidine 42 provides a ligand contact to a divalent metal cation. 4-CDP-2-C-methyl-D-erythritol 2-phosphate-binding positions include 56 to 58, 61 to 65, 100 to 106, 132 to 135, phenylalanine 139, and lysine 142; these read DIG, FPDSD, AQKPKML, and TTEE.

It belongs to the IspF family. Homotrimer. Requires a divalent metal cation as cofactor.

It catalyses the reaction 4-CDP-2-C-methyl-D-erythritol 2-phosphate = 2-C-methyl-D-erythritol 2,4-cyclic diphosphate + CMP. Its pathway is isoprenoid biosynthesis; isopentenyl diphosphate biosynthesis via DXP pathway; isopentenyl diphosphate from 1-deoxy-D-xylulose 5-phosphate: step 4/6. In terms of biological role, involved in the biosynthesis of isopentenyl diphosphate (IPP) and dimethylallyl diphosphate (DMAPP), two major building blocks of isoprenoid compounds. Catalyzes the conversion of 4-diphosphocytidyl-2-C-methyl-D-erythritol 2-phosphate (CDP-ME2P) to 2-C-methyl-D-erythritol 2,4-cyclodiphosphate (ME-CPP) with a corresponding release of cytidine 5-monophosphate (CMP). The chain is 2-C-methyl-D-erythritol 2,4-cyclodiphosphate synthase from Clostridium botulinum (strain 657 / Type Ba4).